Consider the following 160-residue polypeptide: uncharacterized protein (160 aa).

This is an uncharacterized protein from Mycobacterium tuberculosis (strain CDC 1551 / Oshkosh).